Here is a 222-residue protein sequence, read N- to C-terminus: Cytidylate kinase (222 aa).

An ATP-binding site is contributed by 10 to 18 (GPSASGKGT).

Belongs to the cytidylate kinase family. Type 1 subfamily.

It localises to the cytoplasm. The enzyme catalyses CMP + ATP = CDP + ADP. The catalysed reaction is dCMP + ATP = dCDP + ADP. This chain is Cytidylate kinase, found in Chromobacterium violaceum (strain ATCC 12472 / DSM 30191 / JCM 1249 / CCUG 213 / NBRC 12614 / NCIMB 9131 / NCTC 9757 / MK).